The primary structure comprises 67 residues: ATP synthase subunit c (67 aa).

The next 2 helical transmembrane spans lie at 6-26 (ILAL…LVAN) and 46-66 (IMGV…TFFV).

Belongs to the ATPase C chain family. F-type ATPases have 2 components, F(1) - the catalytic core - and F(0) - the membrane proton channel. F(1) has five subunits: alpha(3), beta(3), gamma(1), delta(1), epsilon(1). F(0) has three main subunits: a(1), b(2) and c(10-14). The alpha and beta chains form an alternating ring which encloses part of the gamma chain. F(1) is attached to F(0) by a central stalk formed by the gamma and epsilon chains, while a peripheral stalk is formed by the delta and b chains.

It localises to the cell membrane. Its function is as follows. F(1)F(0) ATP synthase produces ATP from ADP in the presence of a proton or sodium gradient. F-type ATPases consist of two structural domains, F(1) containing the extramembraneous catalytic core and F(0) containing the membrane proton channel, linked together by a central stalk and a peripheral stalk. During catalysis, ATP synthesis in the catalytic domain of F(1) is coupled via a rotary mechanism of the central stalk subunits to proton translocation. In terms of biological role, key component of the F(0) channel; it plays a direct role in translocation across the membrane. A homomeric c-ring of between 10-14 subunits forms the central stalk rotor element with the F(1) delta and epsilon subunits. The protein is ATP synthase subunit c of Streptococcus mutans serotype c (strain ATCC 700610 / UA159).